The chain runs to 155 residues: Ribosome maturation factor RimP (155 aa).

This sequence belongs to the RimP family.

Its subcellular location is the cytoplasm. Required for maturation of 30S ribosomal subunits. This chain is Ribosome maturation factor RimP, found in Prochlorococcus marinus subsp. pastoris (strain CCMP1986 / NIES-2087 / MED4).